The sequence spans 628 residues: Exonuclease V, mitochondrial (628 aa).

A mitochondrion-targeting transit peptide spans 1-21 (MSRFWHFKKFYFTSCYSMQRM). The interval 37-58 (TSEHEQVQSISKEESRSLSSND) is disordered. Basic and acidic residues predominate over residues 38-52 (SEHEQVQSISKEESR). C164, C586, C589, and C595 together coordinate [4Fe-4S] cluster.

This sequence belongs to the EXO5 family. As to quaternary structure, monomer. Requires Mg(2+) as cofactor. [4Fe-4S] cluster serves as cofactor.

Its subcellular location is the mitochondrion. Functionally, single strand DNA specific 5' exonuclease involved in mitochondrial DNA replication and recombination. Releases dinucleotides as main products of catalysis. Has the capacity to slide across 5'double-stranded DNA or 5'RNA sequences and resumes cutting two nucleotides downstream of the double-stranded-to-single-stranded junction or RNA-to-DNA junction, respectively. In Candida albicans (strain SC5314 / ATCC MYA-2876) (Yeast), this protein is Exonuclease V, mitochondrial (DEM1).